The primary structure comprises 125 residues: uncharacterized protein (125 aa).

This is an uncharacterized protein from Bacillus subtilis (strain 168).